Reading from the N-terminus, the 355-residue chain is Probable NADPH-dependent quinone reductase tdiC (355 aa).

This sequence belongs to the zinc-containing alcohol dehydrogenase family. NADPH serves as cofactor.

It functions in the pathway secondary metabolite biosynthesis. Functionally, probable NADPH-dependent quinone reductase; part of the gene cluster that mediates the biosynthesis of terrequinone A, an antitumor agent. The first step in the biosynthetic pathway for terrequinone A is formation of indole pyruvic acid (IPA) from L-tryptophan by the aminotransferase tdiD. The nonribosomal peptide synthase tdiA then immediately converts unstable IPA to didemethylasterriquinone D (DDAQ D), via condensation of 2 IPA molecules. The symmetric connectivity of the 2 IPA molecules is thought to arise by head-to-tail dual Claisen condensations facilitated by the TE domain. TdiB then catalyzes reverse prenylation by transferring dimethylallyl diphosphate to carbon atom 2' of DDAQ D, to yield asterriquinone C-1. Finally, tdiC and tdiE enzymes robustly convert asterriquinone C-1 to terrequinone A via a transformation involving regular prenylation at carbon atom 5, which requires elimination of the hydroxy group on C-5. The chain is Probable NADPH-dependent quinone reductase tdiC from Emericella nidulans (strain FGSC A4 / ATCC 38163 / CBS 112.46 / NRRL 194 / M139) (Aspergillus nidulans).